Here is a 303-residue protein sequence, read N- to C-terminus: N-acetyl-D-glucosamine kinase (303 aa).

ATP is bound by residues 4-11 (GFDIGGTK) and 133-140 (GVGGGLVL). Positions 157, 177, 179, and 184 each coordinate Zn(2+).

Belongs to the ROK (NagC/XylR) family. NagK subfamily.

It catalyses the reaction N-acetyl-D-glucosamine + ATP = N-acetyl-D-glucosamine 6-phosphate + ADP + H(+). It functions in the pathway cell wall biogenesis; peptidoglycan recycling. Functionally, catalyzes the phosphorylation of N-acetyl-D-glucosamine (GlcNAc) derived from cell-wall degradation, yielding GlcNAc-6-P. This Salmonella arizonae (strain ATCC BAA-731 / CDC346-86 / RSK2980) protein is N-acetyl-D-glucosamine kinase.